A 728-amino-acid chain; its full sequence is Nucleolar GTP-binding protein 2 (728 aa).

Methionine 1 bears the N-acetylmethionine mark. Residues 1–33 form a disordered region; the sequence is MVKPKYKGRSTINRSAASTNPDRVQGAGGQNMR. Over residues 10–22 the composition is skewed to polar residues; the sequence is STINRSAASTNPD. The CP-type G domain occupies 207–368; sequence WGELYKVIDS…LIDCPGVVYP (162 aa). Residues 317–324 and 361–365 contribute to the GTP site; these read GYPNVGKS and DCPGV. Disordered stretches follow at residues 462–521, 538–595, and 636–728; these read PPNA…RNSE, VGPQ…DTKA, and YKEE…RQKQ. The span at 480–489 shows a compositional bias: low complexity; the sequence is EVPTETTQNN. Residues 498 to 520 are compositionally biased toward basic and acidic residues; the sequence is EVERSDSITEKEPEGDCSQDRNS. Serine 504 bears the Phosphoserine mark. The span at 553–586 shows a compositional bias: acidic residues; it reads SDLEDLESSGEEEEQEQEQPGEDAEEERSPDTQE. Residues 718–728 are compositionally biased toward basic residues; it reads KHRRNKFRQKQ.

The protein belongs to the TRAFAC class YlqF/YawG GTPase family. NOG2 subfamily. Interacts with LYAR and RPL23A. Interacts with the nuclear importin-beta receptor and, at a lower extent, with importin-alpha.

Its subcellular location is the nucleus. It is found in the nucleolus. Functionally, GTPase that associates with pre-60S ribosomal subunits in the nucleolus and is required for their nuclear export and maturation. May promote cell proliferation possibly by increasing p53/TP53 protein levels, and consequently those of its downstream product CDKN1A/p21, and decreasing RPL23A protein levels. The polypeptide is Nucleolar GTP-binding protein 2 (Gnl2) (Mus musculus (Mouse)).